A 4830-amino-acid chain; its full sequence is Siderophore peptide synthetase fer3 (4830 aa).

Residues 197–623 form an adenylation 1 region; the sequence is LDQAEKFPDR…LGRMNAEQVK (427 aa). The region spanning 751–833 is the Carrier 1 domain; sequence ANEDPVTQAL…DLIPLLSDTT (83 aa). S788 carries the post-translational modification O-(pantetheine 4'-phosphoryl)serine. A condensation 1 region spans residues 879–1317; sequence QKIFPTTATQ…HSLMREPETT (439 aa). The interval 1358 to 1781 is adenylation 2; it reads FENKAATEPE…IGRRDDLVKL (424 aa). A Carrier 2 domain is found at 1929 to 2005; sequence GEDGDLQCQV…MLIRGLATKT (77 aa). Residue S1966 is modified to O-(pantetheine 4'-phosphoryl)serine. A condensation 2 region spans residues 2048-2503; the sequence is IPCSTLQEGM…LLDQVVSLLT (456 aa). Positions 2573–2977 are adenylation 3; it reads AGTPETACIN…LGRRDEQEKI (405 aa). Residues 3122-3198 enclose the Carrier 3 domain; that stretch reads RPLSSLEREI…DIAAELSDSK (77 aa). S3159 is modified (O-(pantetheine 4'-phosphoryl)serine). A condensation 3 region spans residues 3232-3621; the sequence is KVLPCLPSQE…RDRDELRISA (390 aa). The Carrier 4 domain occupies 3685-3760; that stretch reads TAAEEQIRDL…GLSKLLDQRQ (76 aa). S3720 carries the post-translational modification O-(pantetheine 4'-phosphoryl)serine. The tract at residues 3779–4199 is condensation 4; it reads RYKATPLQAG…GVQIKAGASD (421 aa). A Carrier 5 domain is found at 4264-4340; that stretch reads SLSTAEQDIV…RLTVATETRS (77 aa). At S4301 the chain carries O-(pantetheine 4'-phosphoryl)serine. The interval 4381–4708 is condensation 5; the sequence is VLPLLTGQQQ…DLVSRAEHQQ (328 aa).

The protein belongs to the NRP synthetase family.

It functions in the pathway siderophore biosynthesis. In terms of biological role, nonribosomal peptide synthetase; part of the gene cluster that mediates the biosynthesis of siderophore ferrichrome A which is contributing to organismal virulence. The first step of ferrichrome A biosynthesis is performed by the HMG-CoA synthase hcs1 which catalyzes the generation of HMG-CoA and CoA using acetoacetyl-CoA and acetyl-CoA as substrates. The enoyl-CoA isomerase/hydratase fer4 then catalyzes the conversion of hcs1-produced HMG-CoA to methylglutaconyl-CoA. The acyltransferase fer5 then fuses the fer4-generated methylglutaconyl-CoA with sid1-generated hydroxyornithine to yield methylglutaconyl hydroxyornithine. Methylglutaconyl hydroxyornithine is then available for use by the NRPS fer3 to generate ferrichrome A. This Mycosarcoma maydis (Corn smut fungus) protein is Siderophore peptide synthetase fer3.